Reading from the N-terminus, the 88-residue chain is MANHKSSLKRAKQDIVRNTRNKSRKTALKTITKKVDALVADGAAEDAKTTLLAAQKLFDQTAAKGTIHKKTASRKISRLTRRVNAAAK.

Positions 1-10 (MANHKSSLKR) are enriched in basic residues. Residues 1–24 (MANHKSSLKRAKQDIVRNTRNKSR) are disordered.

It belongs to the bacterial ribosomal protein bS20 family.

In terms of biological role, binds directly to 16S ribosomal RNA. This is Small ribosomal subunit protein bS20 from Desulfosudis oleivorans (strain DSM 6200 / JCM 39069 / Hxd3) (Desulfococcus oleovorans).